Reading from the N-terminus, the 1493-residue chain is DNA excision repair protein ERCC-6 (1493 aa).

Residues 1–39 (MPNEGIPHSSQTQEQDCLQSQPVSNNEEMAIKQESGGDG) are disordered. An N-terminal domain; essential for its chromatin remodeling activity region spans residues 1–510 (MPNEGIPHSS…GFLFKKLFKY (510 aa)). Positions 8 to 27 (HSSQTQEQDCLQSQPVSNNE) are enriched in polar residues. Position 10 is a phosphoserine; by ATM (Ser-10). Ser-158 bears the Phosphoserine; by CDK2 mark. Lys-170 carries the post-translational modification N6-methylated lysine; by EHMT2. Lys-205 is covalently cross-linked (Glycyl lysine isopeptide (Lys-Gly) (interchain with G-Cter in SUMO3)). Lys-255 is covalently cross-linked (Glycyl lysine isopeptide (Lys-Gly) (interchain with G-Cter in SUMO2)). Disordered regions lie at residues 287–323 (KQGCNKRAARKAPAPVTPPAPVQNKNKPNKKARVLSK) and 344–453 (GKVG…GRYR). Lys-297 is modified (N6-methylated lysine; by EHMT2). Positions 353-363 (RPWESDMRPEA) are enriched in basic and acidic residues. Positions 364–392 (EGDSEGEESEYFPTEEEEEEEDDEVEGAE) are enriched in acidic residues. Ser-429 and Ser-430 each carry phosphoserine. The residue at position 448 (Lys-448) is an N6-methylated lysine; by EHMT2. Ser-486 and Ser-489 each carry phosphoserine. One can recognise a Helicase ATP-binding domain in the interval 519-695 (WELHCQQAGG…WSLFDFIFPG (177 aa)). 532 to 539 (DEMGLGKT) contacts ATP. The short motif at 646–649 (DEGH) is the DEAH box element. A Helicase C-terminal domain is found at 843 to 1002 (VVESLLKIWH…RRFFKSNDLY (160 aa)). Disordered stretches follow at residues 1042 to 1147 (PAFG…DESI), 1181 to 1247 (HKSK…EQSN), and 1318 to 1384 (RGIS…SGPL). Lys-1054 is modified (N6-methylated lysine; by EHMT2). Residues 1123 to 1141 (ISGNGECSNSSGTGKTSMP) show a composition bias toward polar residues. Position 1142 is a phosphoserine (Ser-1142). A compositionally biased stretch (basic residues) spans 1200 to 1210 (LRPKQKPKNSK). Composition is skewed to basic and acidic residues over residues 1211 to 1221 (HCRDAKFEGTR) and 1232 to 1247 (QKQDSENKSEAKEQSN). Basic residues predominate over residues 1327–1336 (KKSRFGKKRN). Residues 1337–1351 (SNFSVQHPSSTSPTE) show a composition bias toward polar residues. Ser-1348 carries the post-translational modification Phosphoserine. The segment covering 1352–1376 (KCQDGIMKKEGKDNVPEHFSGRAED) has biased composition (basic and acidic residues). Positions 1386–1398 (SSSLLAKMRARNH) match the CSA-interacting motif (CIM) motif. A ubiquitin-binding domain (UBD) region spans residues 1400-1428 (ILPERLESESGHLQEASALLPTTEHDDLL). Positions 1429-1493 (VEMRNFIAFQ…GIWKLKPEYC (65 aa)) are winged-helix domain (WHD). The essential for its interaction with RNA polymerase II, transcription-coupled nucleotide excision repair activity, association with chromatin after UV irradiation and for mediating the UV-induced translocation of ERRC8 to the nuclear matrix stretch occupies residues 1446–1493 (STREILQEFESKLSASQSCVFRELLRNLCTFHRTSGGEGIWKLKPEYC).

This sequence belongs to the SNF2/RAD54 helicase family. In terms of assembly, homodimer. Binds DNA. Interacts with ERCC8. Interacts with RNA polymerase II; interaction is enhanced by UV irradiation. Component of the B-WICH complex, at least composed of SMARCA5/SNF2H, BAZ1B/WSTF, SF3B1, DEK, MYO1C, ERCC6, MYBBP1A and DDX21. Interacts with KIAA1530/UVSSA. Interacts with ELOA and CUL5; the interaction is induced by DNA damaging agents or by inhibitors of RNA polymerase II elongation. Interacts (via WHD region) with RIF1. Interacts with SMARCC2/BAF170, SMARCB1/BAF47 and the neuron-specific chromatin remodeling complex (nBAF complex). Interacts with ERCC5/XPG (via C-terminus); the interaction stimulates ERCC6/CSB binding to the DNA repair bubble and ERCC6/CSB ATPase activity. May form a complex composed of RNA polymerase II, ERCC6/CSB and ERCC5/XPG which associates with the DNA repair bubble during transcription-coupled nucleotide excision repair. Interacts with CAND1, CSTF1, DDX3X, DDX5, DDX17, DDX23, DHX36, HDAC1, HNRNPU, MTA2, PRPF3, PSMD3, RBBP4, SFPQ, SMARCA1, SMARCA2, TOP1, USP7, XRCC5, COPS3, COPS4, COPS6, DDX1, DDX41, GATAD2A, GATAD2B, PRPF4, PSMC5, SF3B2, CTR9, NONO, PSMD12 and TOP2A. Phosphorylated in a cell cycle-dependent manner at Ser-158 by cyclin A-CDK2 and at Ser-10 by ATM in response to DNA damage. Phosphorylation at these two sites promotes the intramolecular interaction of the N-terminal domain with the helicase ATP-binding domain, thereby probably releasing the inhibitory effect of the N-terminal domain on its ATPase activity. Phosphorylation is essential for its chromatin remodeling activity. Post-translationally, ubiquitinated at the C-terminus. Ubiquitination by the CSA complex leads to ERCC6 proteasomal degradation in a UV-dependent manner. Stabilized following interaction with KIAA1530/UVSSA, which promotes recruitment of deubiquitinating enzyme USP7, leading to deubiquitination of ERCC6 thereby preventing UV-induced degradation of ERCC6 by the proteasome. In terms of processing, sumoylation at Lys-205 in an UV-radiation-dependent manner is essential for its transcription-coupled nucleotide excision repair activity.

The protein resides in the nucleus. Its subcellular location is the chromosome. The catalysed reaction is ATP + H2O = ADP + phosphate + H(+). Functionally, essential factor involved in transcription-coupled nucleotide excision repair (TC-NER), a process during which RNA polymerase II-blocking lesions are rapidly removed from the transcribed strand of active genes. Plays a central role in the initiation of the TC-NER process: specifically recognizes and binds RNA polymerase II stalled at a lesion, and mediates recruitment of ERCC8/CSA, initiating DNA damage excision by TFIIH recruitment. Upon DNA-binding, it locally modifies DNA conformation by wrapping the DNA around itself, thereby modifying the interface between stalled RNA polymerase II and DNA. Acts as a chromatin remodeler at DSBs; DNA-dependent ATPase-dependent activity is essential for this function. Plays an important role in regulating the choice of the DNA double-strand breaks (DSBs) repair pathway and G2/M checkpoint activation; DNA-dependent ATPase activity is essential for this function. Regulates the DNA repair pathway choice by inhibiting non-homologous end joining (NHEJ), thereby promoting the homologous recombination (HR)-mediated repair of DSBs during the S/G2 phases of the cell cycle. Mediates the activation of the ATM- and CHEK2-dependent DNA damage responses thus preventing premature entry of cells into mitosis following the induction of DNA DSBs. Remodels chromatin by evicting histones from chromatin flanking DSBs, limiting RIF1 accumulation at DSBs thereby promoting BRCA1-mediated HR. Required for stable recruitment of ELOA and CUL5 to DNA damage sites. Also involved in UV-induced translocation of ERCC8 to the nuclear matrix. Essential for neuronal differentiation and neuritogenesis; regulates transcription and chromatin remodeling activities required during neurogenesis. This Homo sapiens (Human) protein is DNA excision repair protein ERCC-6.